The primary structure comprises 387 residues: Carboxynorspermidine/carboxyspermidine decarboxylase (387 aa).

The residue at position 51 (Lys-51) is an N6-(pyridoxal phosphate)lysine. 2 residues coordinate substrate: Glu-248 and Asp-284.

The protein belongs to the Orn/Lys/Arg decarboxylase class-II family. NspC subfamily. Homodimer. Pyridoxal 5'-phosphate serves as cofactor.

The protein resides in the cytoplasm. It catalyses the reaction carboxynorspermidine + H(+) = norspermidine + CO2. The catalysed reaction is carboxyspermidine + H(+) = spermidine + CO2. Functionally, catalyzes the decarboxylation of carboxynorspermidine and carboxyspermidine. Essential for biofilm formation. This is Carboxynorspermidine/carboxyspermidine decarboxylase from Vibrio cholerae serotype O1 (strain ATCC 39315 / El Tor Inaba N16961).